We begin with the raw amino-acid sequence, 856 residues long: 3-hydroxy-3-methylglutaryl-coenzyme A reductase (856 aa).

The next 4 helical transmembrane spans lie at 12 to 32 (FCASHPWEVIVATLTLTVCML), 89 to 109 (ILGIAGLFTVFSSFVFSSSVI), 123 to 143 (LFFFLLLIDLSKATVLAQFAL), and 190 to 210 (VLCCFACMSVIVNYVVFMTFY). The N-linked (GlcNAc...) asparagine glycan is linked to N326. Residues 344-364 (SADHIVILILLLALAVKFVFF) traverse the membrane as a helical segment. A linker region spans residues 365–443 (ETRDELTTTR…CEVMALVTSG (79 aa)). N-linked (GlcNAc...) asparagine glycosylation is present at N412. The interval 443 to 771 (GHIAGYQLEK…SCTMPSIEIG (329 aa)) is catalytic. Residues E528 and K659 each act as charge relay system in the active site. N700 carries an N-linked (GlcNAc...) asparagine glycan. D735 acts as the Charge relay system in catalysis. H834 (proton donor) is an active-site residue. Positions 836–856 (RHNRSSVSTSGSEPSTPACKS) are disordered. Residue N838 is glycosylated (N-linked (GlcNAc...) asparagine). Positions 840-856 (SSVSTSGSEPSTPACKS) are enriched in low complexity.

This sequence belongs to the HMG-CoA reductase family.

The protein resides in the endoplasmic reticulum membrane. The catalysed reaction is (R)-mevalonate + 2 NADP(+) + CoA = (3S)-3-hydroxy-3-methylglutaryl-CoA + 2 NADPH + 2 H(+). It participates in metabolic intermediate biosynthesis; (R)-mevalonate biosynthesis; (R)-mevalonate from acetyl-CoA: step 3/3. The activity of HMG-CoA-reductase is suppressed by exogenous mevalonate. Functionally, synthesis of mevalonate for the production of non-sterol isoprenoids, which are essential for growth differentiation. This Blattella germanica (German cockroach) protein is 3-hydroxy-3-methylglutaryl-coenzyme A reductase.